Consider the following 380-residue polypeptide: MYG1 exonuclease (380 aa).

The N-terminal 46 residues, 1–46, are a transit peptide targeting the mitochondrion; that stretch reads MGRRFLRGILTLPLRSVLQAQHRMLGSEQDPPAKRPRNNLMAPPRI. 2 positions are modified to N6-acetyllysine: K266 and K272.

The protein belongs to the MYG1 family. Ubiquitously expressed, with highest levels in testis.

The protein localises to the nucleus. Its subcellular location is the nucleoplasm. It is found in the mitochondrion matrix. The protein resides in the nucleolus. 3'-5' RNA exonuclease which cleaves in situ on specific transcripts in both nucleus and mitochondrion. Involved in regulating spatially segregated organellar RNA processing, acts as a coordinator of nucleo-mitochondrial crosstalk. In nucleolus, processes pre-ribosomal RNA involved in ribosome assembly and alters cytoplasmic translation. In mitochondrial matrix, processes 3'-termini of the mito-ribosomal and messenger RNAs and controls translation of mitochondrial proteins. In Mus musculus (Mouse), this protein is MYG1 exonuclease.